The sequence spans 273 residues: Glutamate racemase (273 aa).

Substrate-binding positions include 7 to 8 and 39 to 40; these read DS and YG. C70 (proton donor/acceptor) is an active-site residue. 71–72 is a substrate binding site; that stretch reads NT. C194 serves as the catalytic Proton donor/acceptor. Position 195 to 196 (195 to 196) interacts with substrate; that stretch reads TH.

This sequence belongs to the aspartate/glutamate racemases family.

It catalyses the reaction L-glutamate = D-glutamate. The protein operates within cell wall biogenesis; peptidoglycan biosynthesis. Functionally, provides the (R)-glutamate required for cell wall biosynthesis. The chain is Glutamate racemase from Dinoroseobacter shibae (strain DSM 16493 / NCIMB 14021 / DFL 12).